Reading from the N-terminus, the 192-residue chain is Interferon epsilon (192 aa).

Positions 1-21 (MVHRQLPETVLLLLVSSTIFS) are cleaved as a signal peptide. A disulfide bridge connects residues C52 and C162.

This sequence belongs to the alpha/beta interferon family. As to expression, expressed at very high levels in uterus and, at much lower levels, in ovary and cervix. Very low levels, if any, in other organs. In the endometrium, expressed in the luminal and glandular epithelial cells (at protein level).

The protein localises to the secreted. Its function is as follows. Type I interferon required for maintaining basal levels of IFN-regulated genes, including 2'-5'-oligoadenylate synthetase, IRF7 and ISG15, in the female reproductive tract. Directly mediates protection against viral, including HSV-2, and bacterial, including Chlamydia muridarum, genital infections. In Mus musculus (Mouse), this protein is Interferon epsilon (Ifne).